The following is a 912-amino-acid chain: Ubiquitin carboxyl-terminal hydrolase 3 (912 aa).

A compositionally biased stretch (basic and acidic residues) spans 1–11 (MNMQDANKEES). Disordered regions lie at residues 1–30 (MNMQDANKEESYSMYPKTSSPPPPTPTNMQ), 68–176 (IYHQ…SYSS), 241–384 (NSSV…TTAG), and 396–417 (GKSSSPLLSKQPQKKDKKYVPP). 3 stretches are compositionally biased toward low complexity: residues 82–95 (NNINGGSTTNNNNI), 102–140 (SNGITNNNGSSGNQGANSSGSGMSYNKSHTYHHNYSNNH), and 159–176 (TNSSNGNGSSATSPSYSS). A compositionally biased stretch (basic residues) spans 249 to 259 (AHHHTKSHSIP). Positions 260-310 (KHNEEVKTETHGEEEDAHDKKPHASKDAHELKKKTEVKKEDAKQDRNEKVI) are enriched in basic and acidic residues. Residues 335–355 (SKTSSPSPSPPAAKSWSAIAS) show a composition bias toward low complexity. Polar residues-rich tracts occupy residues 361-384 (RQASNKTVSGSMVTKTPISGTTAG) and 396-406 (GKSSSPLLSKQ). One can recognise a USP domain in the interval 460-911 (RGIINRANIC…TAYILMYQKR (452 aa)). C469 functions as the Nucleophile in the catalytic mechanism. H861 acts as the Proton acceptor in catalysis.

Belongs to the peptidase C19 family. In terms of assembly, heterotetramer with BRE5; contains two molecules of BRE5 and two molecules of UBP3. Forms a complex composed of CDC48, DOA1, deubiquitinase UBP3 and probably BRE5. Within the complex interacts directly with DOA1 and CDC48 in a BRE5-independent manner.

The enzyme catalyses Thiol-dependent hydrolysis of ester, thioester, amide, peptide and isopeptide bonds formed by the C-terminal Gly of ubiquitin (a 76-residue protein attached to proteins as an intracellular targeting signal).. In terms of biological role, has an ATP-independent isopeptidase activity, cleaving at the C-terminus of the ubiquitin moiety in natural or engineered linear fusion proteins, irrespective of their size or the presence of an N-terminal extension to ubiquitin. Plays a role in regulation of silencing by interacting with SIR4. Also, in conjunction with BRE5, cleaves ubiquitin, leading to the subsequent mono-ubiquitination of SEC23. Required for ribophagy, a process which relocalizes ribosomal particles into the vacuole for degradation in response to starvation. This Saccharomyces cerevisiae (strain ATCC 204508 / S288c) (Baker's yeast) protein is Ubiquitin carboxyl-terminal hydrolase 3 (UBP3).